We begin with the raw amino-acid sequence, 566 residues long: MWLLPLVLTSLASSATWAGQPASPPVVDTAQGRVLGKYVSLEGLAQPVAVFLGVPFAKPPLGSLRFAPPQPAEPWSFVKNTTSYPPMCCQDPVVEQMTSDLFTNGKERLTLEFSEDCLYLNIYTPADLTKRGRLPVMVWIHGGGLVLGGAPMYDGVVLAAHENVVVVAIQYRLGIWGFFSTGDEHSRGNWGHLDQVAALHWVQENIANFGGDPGSVTIFGESAGGESVSVLVLSPLAKNLFHRAISESGVALTVALVRKDMKAAAKQIAVLAGCKTTTSAVFVHCLRQKSEDELLDLTLKMKFLTLDFHGDQRESHPFLPTVVDGVLLPKMPEEILAEKDFNTVPYIVGINKQEFGWLLPTMMGFPLSEGKLDQKTATSLLWKSYPIANIPEELTPVATDKYLGGTDDPVKKKDLFLDLMGDVVFGVPSVTVARQHRDAGAPTYMYEFQYRPSFSSDKKPKTVIGDHGDEIFSVFGFPLLKGDAPEEEVSLSKTVMKFWANFARSGNPNGEGLPHWPMYDQEEGYLQIGVNTQAAKRLKGEEVAFWNDLLSKEAAKKPPKIKHAEL.

A signal peptide spans 1–18 (MWLLPLVLTSLASSATWA). Residue N80 is glycosylated (N-linked (GlcNAc...) asparagine). An intrachain disulfide couples C88 to C117. S222 acts as the Acyl-ester intermediate in catalysis. Residues C274 and C285 are joined by a disulfide bond. E354 (charge relay system) is an active-site residue. Residue S379 is modified to Phosphoserine. The active-site Charge relay system is the H467. The short motif at 563-566 (HAEL) is the Prevents secretion from ER element.

The protein belongs to the type-B carboxylesterase/lipase family.

It localises to the endoplasmic reticulum lumen. The enzyme catalyses a carboxylic ester + H2O = an alcohol + a carboxylate + H(+). Activated by CHAPS at concentrations of up to 130 mM, higher concentrations reduce activity. In the presence of CHAPS, activity is stimulated by non-ionic detergents. Inhibited by the esterase inhibitors diisopropylfluorophosphate and phenylmethylsulfonyl fluoride. Its function is as follows. Involved in the detoxification of xenobiotics and in the activation of ester and amide prodrugs. Active towards triacylglycerides containing short-chain fatty acids from C2 to C6, and 1(3)-monoacylglycerols containing fatty acids from C2 to C12. Inactive on long-chain triacylglycerols and diacylglycerol. Hydrolyzes aromatic and alkyl esters and vitamin A acetate. The hydrolysis rate depends upon the amino acid promoiety and the esterification site of the prodrug. Aromatic promoieties are favored, highest rates are observed with phenylalanyl progdrugs, hydrolysis of valyl and isoleucyl prodrugs is less efficient. With floxuridine prodrugs, activity is higher on 5' monoesters than on 3' monoesters. With gemcitabine prodrugs, activity is higher on 3' monoesters than on 5' monoesters. The sequence is that of Liver carboxylesterase from Sus scrofa (Pig).